The chain runs to 417 residues: MDSEKENPASPTTGREEEIPGSSPEGVYPADEDHIFHEDQAPLRVESAKHEEEIVEQQQQQPEDLEQGDMIVEDGDQQFMNMVQITQEDMYEAGFDVEAGFELNHLTEEQLNIVVAISQQRQAKQNEQEHNEEVVIEDGSHHHMVHHEMIENQFEGDGNGPEEEYDGNGQIIDNAMHIILTNDGGVNITSKQKQFYVSPSEIANLNIDLNNLSTENVHQLVQLALPPIKEKAQDSAYNDQAPSTSYHHHHHEQLEAGKSTRSPIIGETVQIRTADGRLQDAVVKYVRGDSEYKIQLMNGEFAYATIDQMLVPQRDRSDHEYQQVAPPVLLRRTDMASVRNAAQKRSANDDLCPPVLKKSYQLAPVVDGPHLVHTPNFCCPICDKKVYQKEPSYIVIRLPACDSCTREKIIVLDEQSS.

Disordered stretches follow at residues M1 to A41 and Q233 to S262. A compositionally biased stretch (basic and acidic residues) spans D31–A41. Residues S235–S245 show a composition bias toward polar residues.

This is an uncharacterized protein from Caenorhabditis elegans.